Consider the following 159-residue polypeptide: Small ribosomal subunit protein uS7 (159 aa).

The protein belongs to the universal ribosomal protein uS7 family. As to quaternary structure, part of the 30S ribosomal subunit. Contacts proteins S9 and S11.

Its function is as follows. One of the primary rRNA binding proteins, it binds directly to 16S rRNA where it nucleates assembly of the head domain of the 30S subunit. Is located at the subunit interface close to the decoding center, probably blocks exit of the E-site tRNA. This chain is Small ribosomal subunit protein uS7, found in Elusimicrobium minutum (strain Pei191).